We begin with the raw amino-acid sequence, 1014 residues long: Collagen alpha-1(I) chain (1014 aa).

The disordered stretch occupies residues 1-1014; that stretch reads SYGYDEKGGI…PGPPGPPGPP (1014 aa). Low complexity predominate over residues 9–22; it reads GISVPGPMGPSGPR. Residues Pro25, Pro28, Pro30, Pro39, Pro42, Pro45, Pro60, Pro75, Pro81, Pro90, and Pro96 each carry the 4-hydroxyproline modification. The segment covering 33 to 51 has biased composition (low complexity); the sequence is QGFQGPPGEPGEPGSSGPM. Residues 63-77 show a composition bias toward basic and acidic residues; the sequence is NGDDGEAGKPGRPGE. Lys99 is modified (5-hydroxylysine; alternate). An O-linked (Gal...) hydroxylysine; alternate glycan is attached at Lys99. Phosphoserine is present on Ser105. Positions 113–129 are enriched in low complexity; sequence DAGPAGPKGEPGSPGEN. 4-hydroxyproline occurs at positions 123, 126, 132, 141, 147, 168, 177, 180, 207, 210, 222, 228, 237, 243, 246, and 261. The segment covering 147–165 has biased composition (low complexity); that stretch reads PGASGPAGARGNDGATGAA. The segment covering 167–179 has biased composition (pro residues); the sequence is PPGPTGPAGPPGF. Residues 213–252 are compositionally biased toward low complexity; that stretch reads AGAAGPAGNPGADGQPGAKGANGAPGIAGAPGFPGARGPS. Lys264 carries the 5-hydroxylysine modification. 4-hydroxyproline occurs at positions 270, 273, 285, 294, 309, 315, 324, and 330. Positions 319–328 are enriched in gly residues; sequence GERGGPGSRG. Lys339 carries the post-translational modification 5-hydroxylysine. Pro348, Pro357, Pro363, Pro369, Pro378, Pro381, Pro390, Pro399, Pro405, Pro417, Pro426, Pro435, Pro438, Pro456, Pro473, Pro479, Pro485, Pro491, Pro497, Pro503, Pro515, Pro524, Pro535, Pro548, Pro554, and Pro563 each carry 4-hydroxyproline. Low complexity predominate over residues 372-398; it reads KGLTGSPGSPGPDGKTGPPGPAGQDGR. Residues 407–426 show a composition bias toward low complexity; sequence ARGQAGVMGFPGPKGAAGEP. The segment covering 485-494 has biased composition (low complexity); sequence PGEAGKPGEQ. Lys575 bears the 5-hydroxylysine mark. Pro581, Pro596, and Pro602 each carry 4-hydroxyproline. Residues 608-622 show a composition bias toward low complexity; that stretch reads SGPSGPAGPTGARGA. Phosphoserine is present on Ser611. A 4-hydroxyproline mark is found at Pro623, Pro629, Pro632, Pro641, Pro647, Pro674, and Pro683. The segment covering 635 to 665 has biased composition (low complexity); the sequence is AGFAGPPGADGQPGAKGEPGDAGAKGDAGPS. Lys686 carries the 5-hydroxylysine modification. The segment covering 691 to 707 has biased composition (low complexity); it reads SAGPPGATGFPGAAGRV. Pro695 and Pro701 each carry 4-hydroxyproline. A 3-hydroxyproline modification is found at Pro709. Residues Pro710, Pro719, Pro722, Pro743, Pro752, Pro760, Pro769, Pro787, Pro796, Pro799, Pro805, Pro820, Pro826, Pro832, Pro841, and Pro847 each carry the 4-hydroxyproline modification. A compositionally biased stretch (low complexity) spans 736-745; sequence ETGPAGRPGE. Over residues 757-769 the composition is skewed to low complexity; the sequence is KGSPGADGPAGAP. Residues 819–829 are compositionally biased toward pro residues; the sequence is PPGPVGPPGLA. Residue Lys856 is modified to 5-hydroxylysine. Pro residues predominate over residues 864–879; that stretch reads PGPPGAPGAPGAPGPV. 3 positions are modified to 4-hydroxyproline: Pro867, Pro870, and Pro873. The span at 900–914 shows a compositional bias: low complexity; that stretch reads AGPAGARGPAGPQGP. The span at 915 to 929 shows a compositional bias: basic and acidic residues; it reads RGDKGETGEQGDRGI. Lys918 carries the 5-hydroxylysine modification. Lys930 is modified (5-hydroxylysine; alternate). Lys930 carries an O-linked (Gal...) hydroxylysine; alternate glycan. Residues Pro945, Pro948, Pro966, and Pro981 each carry the 4-hydroxyproline modification. Over residues 948 to 981 the composition is skewed to low complexity; the sequence is PGEQGPSGASGPAGPRGPPGSAGSPGKDGLNGLP. The residue at position 986 (Pro986) is a 3-hydroxyproline. Pro987 carries the post-translational modification 4-hydroxyproline. Residues 999–1014 show a composition bias toward pro residues; it reads VGPPGPPGPPGPPGPP. Residue Pro1001 is modified to 3-hydroxyproline. A 4-hydroxyproline modification is found at Pro1002. The residue at position 1004 (Pro1004) is a 3-hydroxyproline. Pro1005 carries the 4-hydroxyproline modification. A 3-hydroxyproline modification is found at Pro1007. 4-hydroxyproline occurs at positions 1008, 1011, and 1014.

It belongs to the fibrillar collagen family. As to quaternary structure, trimers of one alpha 2(I) and two alpha 1(I) chains. Contains mostly 4-hydroxyproline. Proline residues at the third position of the tripeptide repeating unit (G-X-Y) are hydroxylated in some or all of the chains. In terms of processing, contains 3-hydroxyproline at a few sites. This modification occurs on the first proline residue in the sequence motif Gly-Pro-Hyp, where Hyp is 4-hydroxyproline. Post-translationally, lysine residues at the third position of the tripeptide repeating unit (G-X-Y) are 5-hydroxylated in some or all of the chains. O-glycosylated on hydroxylated lysine residues. The O-linked glycan consists of a Glc-Gal disaccharide. In terms of tissue distribution, expressed in bones.

The protein resides in the secreted. It is found in the extracellular space. It localises to the extracellular matrix. Functionally, type I collagen is a member of group I collagen (fibrillar forming collagen). In Megatherium americanum (Giant ground sloth), this protein is Collagen alpha-1(I) chain.